The primary structure comprises 533 residues: Glucomannan 4-beta-mannosyltransferase 9 (533 aa).

The helical transmembrane segment at 37 to 57 (IVPALRLGVYICLTMSVMLFV) threads the bilayer. The active site involves Asp-136. 2 residues coordinate substrate: Asp-195 and Asp-197. The active site involves Asp-289. The next 4 membrane-spanning stretches (helical) occupy residues 368–388 (LVAHIVTFIFYCVILPATVLV), 404–426 (VITLLNAVGTPRSLHLMVFWILF), 483–503 (VLELGVGMYLLFVGCYDAFFG), and 510–530 (YLFAQAIAFFIAGFGQIGTIV).

The protein belongs to the glycosyltransferase 2 family. Plant cellulose synthase-like A subfamily. Expressed in cotyledons at the base of the hypocotyls, in root elongation zone, lateral root primordia, vascular system of young leaves, abscission zone of the pedicle,.

The protein resides in the golgi apparatus membrane. It catalyses the reaction GDP-mannose + (glucomannan)n = GDP + (glucomannan)n+1.. Its function is as follows. Possesses glucomannan synthase and mannan synthase activities in vitro. Mannan synthase consists of a 4-beta-mannosyltransferase activity on mannan using GDP-mannose. The beta-1,4-mannan product is the backbone for galactomannan synthesis by galactomannan galactosyltransferase. Galactomannan is a noncellulosic polysaccharides of plant cell wall. Required for lateral root development. The sequence is that of Glucomannan 4-beta-mannosyltransferase 9 from Arabidopsis thaliana (Mouse-ear cress).